Reading from the N-terminus, the 481-residue chain is Protein JASON (481 aa).

The segment at 226-250 is disordered; sequence ECDLDQSNSSNSSENGSSRKPEMGG. Low complexity predominate over residues 232–241; that stretch reads SNSSNSSENG.

Required for normal spindle orientation at male meiosis II and normal formation of tetrad of microspores. Acts as a positive regulator of PS1 in male sporogenesis. Not involved in female meiosis. The polypeptide is Protein JASON (Arabidopsis thaliana (Mouse-ear cress)).